The primary structure comprises 563 residues: DNA repair protein rhp7 (563 aa).

A disordered region spans residues 1–101; that stretch reads MSSGSRVRGP…TDEEAEDNED (101 aa). A compositionally biased stretch (polar residues) spans 39–59; sequence ESAGQSTGTESEVIQTPTSVE. Basic residues predominate over residues 78 to 90; it reads VKRRNLRNQKKKK.

It belongs to the RAD7 family.

The protein localises to the nucleus. In terms of biological role, involved in global genome repair (GGR) via nucleotide excision repair (NER), in conjunction with rhp16, after UV irradiation. In Schizosaccharomyces pombe (strain 972 / ATCC 24843) (Fission yeast), this protein is DNA repair protein rhp7 (rhp7).